Consider the following 350-residue polypeptide: 4-hydroxy-3-methylbut-2-en-1-yl diphosphate synthase (flavodoxin) (350 aa).

The [4Fe-4S] cluster site is built by cysteine 263, cysteine 266, cysteine 298, and glutamate 305.

The protein belongs to the IspG family. [4Fe-4S] cluster is required as a cofactor.

It catalyses the reaction (2E)-4-hydroxy-3-methylbut-2-enyl diphosphate + oxidized [flavodoxin] + H2O + 2 H(+) = 2-C-methyl-D-erythritol 2,4-cyclic diphosphate + reduced [flavodoxin]. Its pathway is isoprenoid biosynthesis; isopentenyl diphosphate biosynthesis via DXP pathway; isopentenyl diphosphate from 1-deoxy-D-xylulose 5-phosphate: step 5/6. In terms of biological role, converts 2C-methyl-D-erythritol 2,4-cyclodiphosphate (ME-2,4cPP) into 1-hydroxy-2-methyl-2-(E)-butenyl 4-diphosphate. The sequence is that of 4-hydroxy-3-methylbut-2-en-1-yl diphosphate synthase (flavodoxin) from Nautilia profundicola (strain ATCC BAA-1463 / DSM 18972 / AmH).